The chain runs to 294 residues: Glyceraldehyde-3-phosphate dehydrogenase (294 aa).

Positions 19, 63, and 105 each coordinate NAD(+). D-glyceraldehyde 3-phosphate contacts are provided by residues 134-136 (SCT), threonine 165, 194-195 (TG), and arginine 217. Cysteine 135 serves as the catalytic Nucleophile.

It belongs to the glyceraldehyde-3-phosphate dehydrogenase family. As to quaternary structure, homotetramer.

It is found in the cytoplasm. It carries out the reaction D-glyceraldehyde 3-phosphate + phosphate + NAD(+) = (2R)-3-phospho-glyceroyl phosphate + NADH + H(+). It participates in carbohydrate degradation; glycolysis; pyruvate from D-glyceraldehyde 3-phosphate: step 1/5. In terms of biological role, catalyzes the oxidative phosphorylation of glyceraldehyde 3-phosphate (G3P) to 1,3-bisphosphoglycerate (BPG) using the cofactor NAD. The first reaction step involves the formation of a hemiacetal intermediate between G3P and a cysteine residue, and this hemiacetal intermediate is then oxidized to a thioester, with concomitant reduction of NAD to NADH. The reduced NADH is then exchanged with the second NAD, and the thioester is attacked by a nucleophilic inorganic phosphate to produce BPG. In Klebsiella aerogenes (Enterobacter aerogenes), this protein is Glyceraldehyde-3-phosphate dehydrogenase (gap).